A 1311-amino-acid chain; its full sequence is MVGGLPNSSLWNIEYDDLVFKDIIGKGNFGCVYRGNYLGVEVAIKQIPSFDDPDYCKYTEREVKALRYIRHPFVVHFFGACKHESGFYLITEFIEGLDLRRYLKSVPKPPKWLSRVNIALGVAKTFLFLHSKNLLHRDLKSKNILLDISRNQIKLCDFGFARVGSQYSNGSDSSSSEDESDSECVNGAAGGGGDDVYKNNGNGKPANYRLRRMSICGTPSFMPPEILLQQKYDWSVDVFSFGILCTELITLKRPGKDYWVRSQNNGFDINIEELNVNIPSPNDCPIQFYDLALKCCSYKHTNRPMFSTIVTILESIKLQLELFENQQQQQQLQQQQQLQQQQQQQQQQQQQQQQQLQLQQQQSSESSSSSSSQPLVNNNNNNSNCNNNNFNNSSNNNNSIANNDSISNVSTTTTSIPTTTTTTTTTTTTTNNITAINGTSNKYLQPLSKHQQQQQRNQNSSIIDNNSLIGSSNTESMITSFSISTFKERKKQSLNKLIRANTINILIGQQQQQQQQQQQQQQQQQDNQSSSQNQLIEREGVIKLDTTKYPNGWKEFGIDNSTNKIWIIYQSNIIKIGSNNNNNLIEMTCGTIIKLKKHSITLSIVDSNLISGANIINVKSYLKDYPYVNKPIKVNQQQQQQQQIITNNYELNLIIKLQSRIRGWLVRRRYKIFLSNWKLNNSNTSQSNKNQWIRLFNQLISSELEYKKQLDQVIKSYLLPIQSKFRINKPLLNYKEIGSIFSNIESLSEIHNELLKIVNQISKSPFFIMNFENEKDDRSNQNNTSATTDIFGDSSIQFTNISINTKDSSNQINSITQFIVKNISQIKNQYGIYAFNFKYSTNIYNWCRLNPDFSIFCDTIRSQLNQQFPDQENDLASLLSLPINKIQKYLLVFEKLAQITPITHSEYKDIKSAFTLIRETSNYIQSQLEMSFEHSHIMSIDIMLQKKDNQSLMQSGRWFIRQGQFTELSSNKQYYLFLLSDICLITKPIKSKSSKYNNNNNINTNNNNNNLTSSATQTNSNKDLSTSINQSTSNANSDNSGNNNNNLINSKYYYRLKTIINLKEEVSMRINPDISNGVLFIGPNKTYKWLLPNDEEAKDWVNDFERTTILIYRNNPNGGGSNNNSIGGGGGGRGGSGNNSNNGSIDLTEINQIHHINNQAIPLSSSNNNITNNNSINNNIIMNNNNNNNKDTEGKGFIKRFRLSFSAGTSTPERKTSLVNMSPSTTSSLNNIDSNYNNNNNNVTNTPIKSVTSSPSIHYTPVNDNNQQPQLPSQPNEEFQFTVPTTPSDKKKKRGSFSSKLKRLSITFSKD.

A Protein kinase domain is found at 18–316 (LVFKDIIGKG…STIVTILESI (299 aa)). Residues 24 to 32 (IGKGNFGCV) and K45 each bind ATP. The Proton acceptor role is filled by D138. 3 disordered regions span residues 169–201 (NGSD…KNNG), 360–426 (QQQS…TTTT), and 446–471 (PLSK…LIGS). The segment covering 451-471 (QQQQQRNQNSSIIDNNSLIGS) has biased composition (low complexity). The 30-residue stretch at 650-679 (ELNLIIKLQSRIRGWLVRRRYKIFLSNWKL) folds into the IQ domain. In terms of domain architecture, DH spans 691 to 927 (QWIRLFNQLI…RETSNYIQSQ (237 aa)). 2 stretches are compositionally biased toward low complexity: residues 994–1021 (SKYN…TNSN) and 1031–1044 (STSN…GNNN). 3 disordered regions span residues 994-1044 (SKYN…GNNN), 1114-1145 (NNPN…NGSI), and 1208-1311 (GTST…FSKD). Over residues 1117–1137 (NGGGSNNNSIGGGGGGRGGSG) the composition is skewed to gly residues. The span at 1208–1229 (GTSTPERKTSLVNMSPSTTSSL) shows a compositional bias: polar residues. The segment covering 1230–1245 (NNIDSNYNNNNNNVTN) has biased composition (low complexity). Residues 1246–1257 (TPIKSVTSSPSI) are compositionally biased toward polar residues. Over residues 1263-1276 (NDNNQQPQLPSQPN) the composition is skewed to low complexity. Residues 1277–1287 (EEFQFTVPTTP) show a composition bias toward polar residues. Residues 1290-1303 (KKKKRGSFSSKLKR) show a composition bias toward basic residues.

It belongs to the protein kinase superfamily. TKL Ser/Thr protein kinase family. The cofactor is Mg(2+).

It catalyses the reaction L-seryl-[protein] + ATP = O-phospho-L-seryl-[protein] + ADP + H(+). The catalysed reaction is L-threonyl-[protein] + ATP = O-phospho-L-threonyl-[protein] + ADP + H(+). The polypeptide is Kinase and exchange factor for Rac A (kxcA) (Dictyostelium discoideum (Social amoeba)).